The sequence spans 717 residues: MNDTEKPADTASEEEDFGDPRTYDPDFKGPVSNRSCTDVLCCMIFLLCIVGYIVLGLVAWVHGDPRRAAYPTDSQGHFCGQKGTPNENKTILFYFNLLRCTSPSVLLNLQCPTTQICVSKCPEKFLTYVEMQLLYTKDKSHWEDYRQFCKTTAKPVKSLTQLLLDDDCPTAIFPSKPFLQRCFPDFSTKNGTLTIGSQIVFQDGNGGTRSVIELRDAANGINKLLDAKSLGLKVFEDYATTWYWILIGLMIAMVLSWIFLILLRFIAGCLFWVFMIGVIGIIGYGIWHCYQQYTNLQEHPRSVLTVYDIGIQTNISMYFELQQTWFTLMIILCIIEVIVILMLIFLRNRIRVAIILLKEGSKAIGYVPSTLVYPALTFILLSICICYWVVTAVFLATSGVPVYKVIAPEGHCIHENQTCDPEIFNTTEIAKACPGALCNFAFYGGKSLYHQYIPTFHVYNLFVFLWLINFVIALGQCALAGAFATYYWAMKKPDDIPRYPLFTAFGRAIRYHTGSLAFGSLIIALIQMFKIVLEYLNHRLKRTENTLSKFLQCCLRCCFWCLENAIKFLNRNAYIMIAIYGRNFCRSAKDAFNLLMRNVLKVAVTDEVTYFVLFLGKILVAGSIGVLAFLFFTQRLPVIAQGPASLNYYWVPLLTVILGSYLIAHGFFSVYAMCVETIFICFLEDLERNDGSTARPYYVSQPLLKIFQEENLQTKQQ.

Positions 1-24 (MNDTEKPADTASEEEDFGDPRTYD) are disordered. At 1–38 (MNDTEKPADTASEEEDFGDPRTYDPDFKGPVSNRSCTD) the chain is on the cytoplasmic side. The helical transmembrane segment at 39-59 (VLCCMIFLLCIVGYIVLGLVA) threads the bilayer. Over 60–242 (WVHGDPRRAA…KVFEDYATTW (183 aa)) the chain is Extracellular. Asparagine 88 and asparagine 190 each carry an N-linked (GlcNAc...) asparagine glycan. A helical membrane pass occupies residues 243-263 (YWILIGLMIAMVLSWIFLILL). Residues 264-265 (RF) lie on the Cytoplasmic side of the membrane. Residues 266–286 (IAGCLFWVFMIGVIGIIGYGI) form a helical membrane-spanning segment. At 287 to 325 (WHCYQQYTNLQEHPRSVLTVYDIGIQTNISMYFELQQTW) the chain is on the extracellular side. Asparagine 314 is a glycosylation site (N-linked (GlcNAc...) asparagine). A helical membrane pass occupies residues 326–346 (FTLMIILCIIEVIVILMLIFL). The Cytoplasmic portion of the chain corresponds to 347 to 351 (RNRIR). Residues 352–372 (VAIILLKEGSKAIGYVPSTLV) form a helical membrane-spanning segment. The Extracellular portion of the chain corresponds to 373–374 (YP). A helical membrane pass occupies residues 375–395 (ALTFILLSICICYWVVTAVFL). Residues 396–460 (ATSGVPVYKV…QYIPTFHVYN (65 aa)) are Cytoplasmic-facing. Residues 461 to 481 (LFVFLWLINFVIALGQCALAG) form a helical membrane-spanning segment. The Extracellular segment spans residues 482 to 515 (AFATYYWAMKKPDDIPRYPLFTAFGRAIRYHTGS). A helical transmembrane segment spans residues 516–536 (LAFGSLIIALIQMFKIVLEYL). Over 537 to 610 (NHRLKRTENT…KVAVTDEVTY (74 aa)) the chain is Cytoplasmic. Residues 611–631 (FVLFLGKILVAGSIGVLAFLF) form a helical membrane-spanning segment. Topologically, residues 632 to 649 (FTQRLPVIAQGPASLNYY) are extracellular. A helical membrane pass occupies residues 650 to 670 (WVPLLTVILGSYLIAHGFFSV). Residues 671-717 (YAMCVETIFICFLEDLERNDGSTARPYYVSQPLLKIFQEENLQTKQQ) lie on the Cytoplasmic side of the membrane.

This sequence belongs to the CTL (choline transporter-like) family.

It localises to the cell membrane. The enzyme catalyses choline(out) + n H(+)(in) = choline(in) + n H(+)(out). In terms of biological role, choline/H+ antiporter. The protein is Choline transporter-like protein 5 (SLC44A5) of Macaca fascicularis (Crab-eating macaque).